The chain runs to 1226 residues: Double-stranded RNA-specific adenosine deaminase (1226 aa).

Arginine 26 is modified (asymmetric dimethylarginine). Residues 133 to 199 (LSIYQDQEQR…GTPPLWKIAV (67 aa)) form the Z-binding 1 domain. Positions 133-202 (LSIYQDQEQR…PLWKIAVSTQ (70 aa)) are interaction with Z-DNA. Disordered stretches follow at residues 208-238 (SGVV…TSVS) and 258-286 (GVVR…STSA). Serine 285 carries the post-translational modification Phosphoserine. The Z-binding 2 domain occupies 293-357 (FLDMAEIKEK…TTPPIWHLTD (65 aa)). Glycyl lysine isopeptide (Lys-Gly) (interchain with G-Cter in SUMO2) cross-links involve residues lysine 384 and lysine 408. Lysine 418 participates in a covalent cross-link: Glycyl lysine isopeptide (Lys-Gly) (interchain with G-Cter in SUMO); alternate. Residue lysine 418 forms a Glycyl lysine isopeptide (Lys-Gly) (interchain with G-Cter in SUMO1); alternate linkage. A Glycyl lysine isopeptide (Lys-Gly) (interchain with G-Cter in SUMO2); alternate cross-link involves residue lysine 418. Serine 481 is subject to Phosphoserine. The region spanning 503 to 571 (NPISGLLEYA…AMKAMTILLE (69 aa)) is the DRBM 1 domain. Residues 574–597 (KAKDSGKSEESSHYSTEKESEKTA) are compositionally biased toward basic and acidic residues. The interval 574–610 (KAKDSGKSEESSHYSTEKESEKTAESQTPTPSATSFF) is disordered. Residue lysine 580 forms a Glycyl lysine isopeptide (Lys-Gly) (interchain with G-Cter in SUMO2) linkage. Polar residues predominate over residues 600 to 610 (QTPTPSATSFF). Phosphothreonine is present on residues threonine 601 and threonine 603. Phosphoserine is present on residues serine 614, serine 629, and serine 636. The DRBM 2 domain occupies 614-682 (SPVTTLLECM…AEEAMKALHG (69 aa)). The segment at 716-725 (IGELVRYLNT) is N-terminal extension of DRBM 3 and constituent of a bi-partite nuclear localization signal. Residues 726 to 794 (NPVGGLLEYA…ADAALRVLIG (69 aa)) form the DRBM 3 domain. Residues 795 to 801 (ENEKAER) are C-terminal extension of DRBM 3 and constituent of a bi-partite nuclear localization signal. Residue threonine 808 is modified to Phosphothreonine. Serine 814, serine 823, and serine 825 each carry phosphoserine. Lysine 875 is covalently cross-linked (Glycyl lysine isopeptide (Lys-Gly) (interchain with G-Cter in SUMO2)). Residues 886 to 1221 (SLGTGNRCVK…ISKPQEEKNF (336 aa)) form the A to I editase domain. Position 910 (histidine 910) interacts with Zn(2+). Glutamate 912 (proton donor) is an active-site residue. Residues cysteine 966 and cysteine 1036 each contribute to the Zn(2+) site.

Homodimer. Homodimerization is essential for its catalytic activity. Isoform 5 can form heterodimers with ADARB1/ADAR2. Isoform 1 interacts with ILF2/NF45 and ILF3/NF90. Binding to ILF3/NF90 up-regulates ILF3-mediated gene expression. Isoform 1 and isoform 5 (via DRBM 3 domain) interact with TNPO1. Isoform 5 (via DRBM domains) interacts with XPO5. Isoform 1 and isoform 5 can interact with EIF2AK2/PKR and UPF1. Post-translationally, sumoylation reduces RNA-editing activity. Ubiquitously expressed, highest levels were found in brain and lung. Isoform 5 is expressed at higher levels in astrocytomas as compared to normal brain tissue and expression increases strikingly with the severity of the tumor, being higher in the most aggressive tumors.

The protein localises to the cytoplasm. It is found in the nucleus. Its subcellular location is the nucleolus. The catalysed reaction is adenosine in double-stranded RNA + H2O + H(+) = inosine in double-stranded RNA + NH4(+). Functionally, catalyzes the hydrolytic deamination of adenosine to inosine in double-stranded RNA (dsRNA) referred to as A-to-I RNA editing. This may affect gene expression and function in a number of ways that include mRNA translation by changing codons and hence the amino acid sequence of proteins since the translational machinery read the inosine as a guanosine; pre-mRNA splicing by altering splice site recognition sequences; RNA stability by changing sequences involved in nuclease recognition; genetic stability in the case of RNA virus genomes by changing sequences during viral RNA replication; and RNA structure-dependent activities such as microRNA production or targeting or protein-RNA interactions. Can edit both viral and cellular RNAs and can edit RNAs at multiple sites (hyper-editing) or at specific sites (site-specific editing). Its cellular RNA substrates include: bladder cancer-associated protein (BLCAP), neurotransmitter receptors for glutamate (GRIA2) and serotonin (HTR2C) and GABA receptor (GABRA3). Site-specific RNA editing of transcripts encoding these proteins results in amino acid substitutions which consequently alters their functional activities. Exhibits low-level editing at the GRIA2 Q/R site, but edits efficiently at the R/G site and HOTSPOT1. Its viral RNA substrates include: hepatitis C virus (HCV), vesicular stomatitis virus (VSV), measles virus (MV), hepatitis delta virus (HDV), and human immunodeficiency virus type 1 (HIV-1). Exhibits either a proviral (HDV, MV, VSV and HIV-1) or an antiviral effect (HCV) and this can be editing-dependent (HDV and HCV), editing-independent (VSV and MV) or both (HIV-1). Impairs HCV replication via RNA editing at multiple sites. Enhances the replication of MV, VSV and HIV-1 through an editing-independent mechanism via suppression of EIF2AK2/PKR activation and function. Stimulates both the release and infectivity of HIV-1 viral particles by an editing-dependent mechanism where it associates with viral RNAs and edits adenosines in the 5'UTR and the Rev and Tat coding sequence. Can enhance viral replication of HDV via A-to-I editing at a site designated as amber/W, thereby changing an UAG amber stop codon to an UIG tryptophan (W) codon that permits synthesis of the large delta antigen (L-HDAg) which has a key role in the assembly of viral particles. However, high levels of ADAR1 inhibit HDV replication. The polypeptide is Double-stranded RNA-specific adenosine deaminase (ADAR) (Homo sapiens (Human)).